We begin with the raw amino-acid sequence, 896 residues long: Alanine--tRNA ligase (896 aa).

Zn(2+)-binding residues include histidine 574, histidine 578, cysteine 677, and histidine 681.

This sequence belongs to the class-II aminoacyl-tRNA synthetase family. Zn(2+) serves as cofactor.

It localises to the cytoplasm. It carries out the reaction tRNA(Ala) + L-alanine + ATP = L-alanyl-tRNA(Ala) + AMP + diphosphate. Functionally, catalyzes the attachment of alanine to tRNA(Ala) in a two-step reaction: alanine is first activated by ATP to form Ala-AMP and then transferred to the acceptor end of tRNA(Ala). Also edits incorrectly charged Ser-tRNA(Ala) and Gly-tRNA(Ala) via its editing domain. This Mycoplasma mycoides subsp. mycoides SC (strain CCUG 32753 / NCTC 10114 / PG1) protein is Alanine--tRNA ligase.